We begin with the raw amino-acid sequence, 518 residues long: Arginyl-tRNA--protein transferase 1 (518 aa).

Positions 149–165 (ESLQSEGKNSKKEEPHE) are enriched in basic and acidic residues. The segment at 149-207 (ESLQSEGKNSKKEEPHELLQSQDSVGEKLGSGEPSHSVKVHTVPKPGKGADLSKPPCRK) is disordered. Serine 169 is modified (phosphoserine).

Belongs to the R-transferase family. Monomer. Interacts with LIAT1; LIAT1 is not a substrate of ATE1, the interaction takes place in the cytoplasm and seems to increase ATE1 arginyltransferase activity.

It localises to the nucleus. The protein localises to the cytoplasm. The enzyme catalyses an N-terminal L-alpha-aminoacyl-[protein] + L-arginyl-tRNA(Arg) = an N-terminal L-arginyl-L-aminoacyl-[protein] + tRNA(Arg) + H(+). Involved in the post-translational conjugation of arginine to the N-terminal aspartate or glutamate of a protein. This arginylation is required for degradation of the protein via the ubiquitin pathway. Does not arginylate cysteine residues. The polypeptide is Arginyl-tRNA--protein transferase 1 (ATE1) (Macaca fascicularis (Crab-eating macaque)).